The sequence spans 326 residues: MKIHLNGEPHNAEAGTTLEGLLMGLGFAPEKVAVERNKAVVSRGTYGAVVLQEDDQIEVVHFIGGGQHPPADSWSVAGLTFNSRLLVGTGKYKDFEETKIAIEASGAEIVTVAVRRVNVSNPNAPMLTDYIDPKKYTYLPNTAGCFTAEDAVRTLRLAREAGGWDLVKLEVLSDEKYLWPNNPETLKAAEILVQEGFKVMVYTTDDPHMCKRFEDLGCVAVMPLAAPIGSGLGVRNPYTTRIIVEQAKVPVLVDAGVGTASDAAIAMELGCDGVLMNTAIAGAKDPILMAHAMKHAVLAGRQAYLAGRIQKKLYATASSPLDGTFF.

Lys-168 serves as the catalytic Schiff-base intermediate with DXP. 1-deoxy-D-xylulose 5-phosphate-binding positions include Gly-229, 255-256, and 277-278; these read AG and NT.

This sequence belongs to the ThiG family. As to quaternary structure, homotetramer. Forms heterodimers with either ThiH or ThiS.

The protein localises to the cytoplasm. The enzyme catalyses [ThiS sulfur-carrier protein]-C-terminal-Gly-aminoethanethioate + 2-iminoacetate + 1-deoxy-D-xylulose 5-phosphate = [ThiS sulfur-carrier protein]-C-terminal Gly-Gly + 2-[(2R,5Z)-2-carboxy-4-methylthiazol-5(2H)-ylidene]ethyl phosphate + 2 H2O + H(+). The protein operates within cofactor biosynthesis; thiamine diphosphate biosynthesis. In terms of biological role, catalyzes the rearrangement of 1-deoxy-D-xylulose 5-phosphate (DXP) to produce the thiazole phosphate moiety of thiamine. Sulfur is provided by the thiocarboxylate moiety of the carrier protein ThiS. In vitro, sulfur can be provided by H(2)S. In Magnetococcus marinus (strain ATCC BAA-1437 / JCM 17883 / MC-1), this protein is Thiazole synthase.